The primary structure comprises 286 residues: Transcription factor MYB62 (286 aa).

2 consecutive HTH myb-type domains span residues 16–68 (DEEL…LNYL) and 69–123 (KPDI…QKQA). 2 DNA-binding regions (H-T-H motif) span residues 44–68 (WNHVAKCAGLKRTGKSCRLRWLNYL) and 96–119 (WSKIAQYLPGRTDNEIKNYWRTRV).

As to expression, expressed in leaves and flowers.

The protein resides in the nucleus. Functionally, transcription repressor of phosphate (Pi) starvation-induced genes. Negatively regulates Pi starvation responses via the repression of gibberellic acid (GA) biosynthesis and signaling. Modulates root architecture, phosphatase activity, and Pi uptake and accumulation. The polypeptide is Transcription factor MYB62 (Arabidopsis thaliana (Mouse-ear cress)).